The following is a 37-amino-acid chain: Cytochrome b6-f complex subunit 5 (37 aa).

Residues 5–25 form a helical membrane-spanning segment; it reads FLLGIILGLIPITLIGLFVTA.

The protein belongs to the PetG family. In terms of assembly, the 4 large subunits of the cytochrome b6-f complex are cytochrome b6, subunit IV (17 kDa polypeptide, PetD), cytochrome f and the Rieske protein, while the 4 small subunits are PetG, PetL, PetM and PetN. The complex functions as a dimer.

Its subcellular location is the plastid membrane. Component of the cytochrome b6-f complex, which mediates electron transfer between photosystem II (PSII) and photosystem I (PSI), cyclic electron flow around PSI, and state transitions. PetG is required for either the stability or assembly of the cytochrome b6-f complex. This chain is Cytochrome b6-f complex subunit 5, found in Cuscuta obtusiflora (Peruvian dodder).